A 166-amino-acid polypeptide reads, in one-letter code: Large ribosomal subunit protein uL10 (166 aa).

This sequence belongs to the universal ribosomal protein uL10 family. Part of the ribosomal stalk of the 50S ribosomal subunit. The N-terminus interacts with L11 and the large rRNA to form the base of the stalk. The C-terminus forms an elongated spine to which L12 dimers bind in a sequential fashion forming a multimeric L10(L12)X complex.

Its function is as follows. Forms part of the ribosomal stalk, playing a central role in the interaction of the ribosome with GTP-bound translation factors. In Bacillus pumilus (strain SAFR-032), this protein is Large ribosomal subunit protein uL10.